The chain runs to 47 residues: Large ribosomal subunit protein bL32c (47 aa).

This sequence belongs to the bacterial ribosomal protein bL32 family.

It localises to the plastid. This is Large ribosomal subunit protein bL32c (rpl32) from Prototheca wickerhamii.